Here is a 539-residue protein sequence, read N- to C-terminus: Lysosomal cobalamin transport escort protein LMBD1 (539 aa).

Topologically, residues 1–7 are extracellular; sequence MAAAASE. Residues 8–28 traverse the membrane as a helical segment; sequence LLTGWFLFGLALLAILIFSWV. The Cytoplasmic portion of the chain corresponds to 29–47; it reads YVRKYQSRRESEVISTVTA. Residues 48–68 form a helical membrane-spanning segment; the sequence is IFALAVALISSALLPVDIFLV. The Extracellular portion of the chain corresponds to 69–97; it reads SYMKNQNGTFKDWADANVSRQIEDTVLYG. Asparagine 75 and asparagine 85 each carry an N-linked (GlcNAc...) asparagine glycan. Residues 98 to 118 form a helical membrane-spanning segment; it reads YYTLYSIILFCVFLWIPFVYF. The Cytoplasmic portion of the chain corresponds to 119 to 141; it reads YYEEKEEDDGNTCSQVKTALKYT. Residues 142–162 traverse the membrane as a helical segment; the sequence is LGFITVCAVLLLIGAFVPLDI. The Extracellular portion of the chain corresponds to 163-185; that stretch reads PNKKNSTEWEKVKLLFEEFGSSH. Residue asparagine 167 is glycosylated (N-linked (GlcNAc...) asparagine). Residues 186 to 206 traverse the membrane as a helical segment; sequence GLTALSFSISSLTVIGMLAAI. Residues 207–302 are Cytoplasmic-facing; that stretch reads TYTAYGMSAL…KFCEAIRPLK (96 aa). Residues 303-323 form a helical membrane-spanning segment; it reads IVWGVFFIIVALLFTVSLFLS. Topologically, residues 324-361 are extracellular; that stretch reads NLDKALHSAGFDSGFIILGTNLTNPLNMLLPVLQTVFP. Asparagine 344 carries an N-linked (GlcNAc...) asparagine glycan. The helical transmembrane segment at 362–382 threads the bilayer; that stretch reads LDYILITTIVMYFIFTSMAGI. Topologically, residues 383–405 are cytoplasmic; it reads RNMGIWFFWIRLYKIRRGKTRPQ. The chain crosses the membrane as a helical span at residues 406–426; that stretch reads ALLFLCMILLLIVLHTSYMIY. Residues 427 to 483 are Extracellular-facing; sequence SLAPQYVMYGSQKYLVQSNKTIDGQPKNVTTFVAKDCDADAPEDQCIVTRTYLFLHK. N-linked (GlcNAc...) asparagine glycosylation is found at asparagine 445 and asparagine 454. Residues 484-504 form a helical membrane-spanning segment; it reads FWFFSAVYYFGNWAFIAVFLI. Residues 505-539 lie on the Cytoplasmic side of the membrane; sequence GLIVSCCKGKKSVIEGEVDEDDSDMSDDELSAYYC.

This sequence belongs to the LIMR family. LMBRD1 subfamily.

The protein localises to the endoplasmic reticulum membrane. It localises to the lysosome membrane. Its subcellular location is the cell membrane. In terms of biological role, lysosomal membrane chaperone required to export cobalamin (vitamin B12) from the lysosome to the cytosol, allowing its conversion to cofactors. Targets ABCD4 transporter from the endoplasmic reticulum to the lysosome. Then forms a complex with lysosomal ABCD4 and cytoplasmic MMACHC to transport cobalamin across the lysosomal membrane. May play a role in mediating and regulating the internalization of the insulin receptor. In Gallus gallus (Chicken), this protein is Lysosomal cobalamin transport escort protein LMBD1 (LMBRD1).